The primary structure comprises 361 residues: GDSL esterase/lipase At4g18970 (361 aa).

A signal peptide spans 1-22 (MARVCVMMMAMAIAMAMNIAMG). S35 (nucleophile) is an active-site residue. Residues D325 and H328 contribute to the active site.

Belongs to the 'GDSL' lipolytic enzyme family.

Its subcellular location is the secreted. In Arabidopsis thaliana (Mouse-ear cress), this protein is GDSL esterase/lipase At4g18970.